A 481-amino-acid chain; its full sequence is Glutamyl-tRNA(Gln) amidotransferase subunit A (481 aa).

Residues Lys-76 and Ser-151 each act as charge relay system in the active site. Catalysis depends on Ser-175, which acts as the Acyl-ester intermediate.

It belongs to the amidase family. GatA subfamily. Heterotrimer of A, B and C subunits.

It catalyses the reaction L-glutamyl-tRNA(Gln) + L-glutamine + ATP + H2O = L-glutaminyl-tRNA(Gln) + L-glutamate + ADP + phosphate + H(+). Its function is as follows. Allows the formation of correctly charged Gln-tRNA(Gln) through the transamidation of misacylated Glu-tRNA(Gln) in organisms which lack glutaminyl-tRNA synthetase. The reaction takes place in the presence of glutamine and ATP through an activated gamma-phospho-Glu-tRNA(Gln). The polypeptide is Glutamyl-tRNA(Gln) amidotransferase subunit A (Neisseria meningitidis serogroup C / serotype 2a (strain ATCC 700532 / DSM 15464 / FAM18)).